A 1308-amino-acid chain; its full sequence is Cilia- and flagella-associated protein 57 C (1308 aa).

WD repeat units follow at residues 57–99, 110–154, 415–454, 504–546, 551–590, 645–689, and 694–733; these read NEYR…RRKN, YNIK…KCLG, NHTG…IKIS, SPFK…NPSQ, GHTG…QHQQ, LLDI…GKFT, and HDER…ARGM. Residues 779–1000 adopt a coiled-coil conformation; that stretch reads LNSRDDRIRQ…RDKIDGQKKI (222 aa).

It belongs to the CFAP57 family. In terms of assembly, forms a heterodimer with CFAP57A. Associates with components of the nexin-dynein regulatory complex (N-DRC) and the CFAP184:CFAP263 complex.

The protein resides in the cell projection. It localises to the cilium. Functionally, associates with components of the nexin-dynein regulatory complex (N-DRC), a key regulator of ciliary/flagellar motility, and might act as an inner dynein arm (IDA) hub or linkage. This is Cilia- and flagella-associated protein 57 C (CFAP57C) from Tetrahymena thermophila (strain SB210).